The primary structure comprises 470 residues: Annexin C1 (470 aa).

Positions 1–143 (MYGQQNNYGA…QGQSPMMYLG (143 aa)) are disordered. Low complexity predominate over residues 15–34 (QWGQAPPQGYQPGYQNGPPA). A compositionally biased stretch (pro residues) spans 82–92 (PQPPFGAPSPA). Low complexity-rich tracts occupy residues 93–110 (PAGY…YGAP) and 128–138 (GYGSQPQGQSP). 4 Annexin repeats span residues 161–232 (YDAR…LLSL), 233–304 (GPLG…MALS), 316–388 (QLVQ…FIAR), and 395–468 (DGVV…GIIE).

This sequence belongs to the annexin family.

Its function is as follows. Does not appear to play a major role in virulence. May play a role in titan cell formation. The protein is Annexin C1 of Cryptococcus neoformans var. grubii serotype A (strain H99 / ATCC 208821 / CBS 10515 / FGSC 9487) (Filobasidiella neoformans var. grubii).